A 291-amino-acid polypeptide reads, in one-letter code: Lysosomal amino acid transporter 1 homolog (291 aa).

Topologically, residues 1–37 (MVWKKLGSRNFSSCPSGSIQWIWDVLGECAQDGWDEA) are lumenal. The N-linked (GlcNAc...) asparagine glycan is linked to N10. The region spanning 34–100 (WDEASVGLGL…LADQLPLQTY (67 aa)) is the PQ-loop 1 domain. A helical transmembrane segment spans residues 38–58 (SVGLGLISILCFAASTFPQFI). At 59-71 (KAYKTGNMDQALS) the chain is on the cytoplasmic side. The chain crosses the membrane as a helical span at residues 72-92 (LWFLLGWIGGDSCNLIGSFLA). Residues 93-98 (DQLPLQ) lie on the Lumenal side of the membrane. A helical transmembrane segment spans residues 99–119 (TYTAVYYVLADLVMLTLYFYY). Over 120-134 (KFRTRPSLLSAPINS) the chain is Cytoplasmic. The chain crosses the membrane as a helical span at residues 135–155 (VLLFLMGMACATPLLSAAGPV). At 156 to 182 (AAPREAFRGRALLSVESGSKPFTRQEV) the chain is on the lumenal side. A helical membrane pass occupies residues 183–203 (IGFVIGSISSVLYLLSRLPQI). Residues 184 to 243 (GFVIGSISSVLYLLSRLPQIRTNFLRKSTQGISYSLFALVMLGNTLYGLSVLLKNPEEGQ) form the PQ-loop 2 domain. Residues 204–214 (RTNFLRKSTQG) are Cytoplasmic-facing. Residues 215-235 (ISYSLFALVMLGNTLYGLSVL) form a helical membrane-spanning segment. At 236–254 (LKNPEEGQSEGSYLLHHLP) the chain is on the lumenal side. Residues 255 to 275 (WLVGSLGVLLLDTIISIQFLV) form a helical membrane-spanning segment. At 276–291 (YRRSTAASELEPLLPS) the chain is on the cytoplasmic side. A Di-leucine motif motif is present at residues 288–289 (LL).

The protein belongs to the laat-1 family.

The protein localises to the lysosome membrane. Functionally, amino acid transporter that specifically mediates the pH-dependent export of the cationic amino acids arginine, histidine and lysine from lysosomes. The protein is Lysosomal amino acid transporter 1 homolog of Homo sapiens (Human).